We begin with the raw amino-acid sequence, 194 residues long: PRELI domain containing protein 3B (194 aa).

The PRELI/MSF1 domain maps to 1–172; the sequence is MKIWTSEHVF…VIHKLNAEIE (172 aa). Phosphoserine occurs at positions 46 and 51.

The protein belongs to the slowmo family.

This is PRELI domain containing protein 3B (PRELID3B) from Homo sapiens (Human).